We begin with the raw amino-acid sequence, 1268 residues long: MSSVAVLTQESFAEHRSGLVPQQIKVATLNSEEENDPPTYKDAFPPLPEKAACLESAQEPAGAWSNKIRPIKASVITQVFHVPLEERKYKDMNQFGEGEQAKICLEIMQRTGAHLELSLAKDQGLSIMVSGKLDAVMKARKDIVARLQTQASATVPIPKEHHRFVIGKNGEKLQDLELKTATKIQIPRPDDPSNQIKITGTKEGIEKARHEVLLISAEQDKRAVERLEVEKAFHPFIAGPYNRLVGEIMQETGTRINIPPPSVNRTEIVFTGEKEQLAQAVARIKKIYEEKKKKTTTIAVEVKKSQHKYVIGPKGNSLQEILERTGVSVEIPPSDSISETVILRGEPEKLGQALTEVYAKANSFTVSSVSAPSWLHRFIIGKKGQNLAKITQQMPKVHIEFTEGEDKITLEGPTEDVNVAQEQIEGMVKDLINRMDYVEINIDHKFHRHLIGKSGANINRIKDQYKVSVRIPPDSEKSNLIRIEGDPQGVQQAKRELLELASRMENERTKDLIIEQRFHRTIIGQKGERIREIRDKFPEVIINFPDPAQKSDIVQLRGPKNEVEKCTKYMQKMVADLVENSYSISVPIFKQFHKNIIGKGGANIKKIREESNTKIDLPAENSNSETIIITGKRANCEAARSRILSIQKDLANIAEVEVSIPAKLHNSLIGTKGRLIRSIMEECGGVHIHFPVEGSGSDTVVIRGPSSDVEKAKKQLLHLAEEKQTKSFTVDIRAKPEYHKFLIGKGGGKIRKVRDSTGARIIFPAAEDKDQDLITIIGKEDAVREAQKELEALIQNLENVVEDYMLVDPKHHRHFVIRRGQVLREIAEEYGGVMVSFPRSGTQSDKVTLKGAKDCVEAAKKRIQEIIEDLEAQVTVECAIPQKFHRSVMGPKGSRIQQITRDYNVQIKFPDREENPVHSVEPSIQENGDEAGEGREAKETDPGSPRRCDIIIISGRKEKCEAAKEALEALVPVTIEVEVPFDLHRYIIGQKGSGIRKMMDEFEVNIHVPAPELQSDTIAITGLAANLDRAKAGLLDRVKELQAEQEDRALRSFKLSVTVDPKYHPKIIGRKGAVITQIRLEHEVNIQFPDKDDGNQPQDQITITGYEKNTEAARDAILKIVGELEQMVSEDVPLDHRVHARIIGARGKAIRKIMDEFKVDIRFPQSGAPDPNCVTVTGLPENVEEAIDHILNLEEEYLADVVDSEALQVYMKPPAHEESRAPSKGFVVRDAPWTSNSSEKAPDMSSSEEFPSFGAQVAPKTLPWGPKR.

Serine 2 carries the N-acetylserine modification. Threonine 8 is modified (phosphothreonine). Phosphoserine is present on residues serine 11 and serine 31. KH domains are found at residues 150 to 212 (QASA…RHEV), 222 to 284 (RAVE…VARI), 295 to 357 (TTTI…LTEV), 364 to 424 (FTVS…QEQI), 435 to 497 (MDYV…KREL), 507 to 570 (ERTK…TKYM), and 581 to 643 (SYSI…RSRI). 2 positions are modified to phosphothreonine: threonine 295 and threonine 296. At serine 317 the chain carries Phosphoserine. Tyrosine 437 bears the Phosphotyrosine mark. Residue serine 645 is modified to Phosphoserine. 7 consecutive KH domains span residues 653–716 (IAEV…KKQL), 727–790 (SFTV…QKEL), 800–863 (VVED…KKRI), 873–967 (QVTV…KEAL), 972–1034 (PVTI…KAGL), 1052–1117 (SFKL…RDAI), and 1127–1190 (MVSE…IDHI). Residues 910-947 (PDREENPVHSVEPSIQENGDEAGEGREAKETDPGSPRR) form a disordered region. Residues 932–947 (GEGREAKETDPGSPRR) are compositionally biased toward basic and acidic residues. Lysine 991 is modified (N6-acetyllysine). The interval 1213–1268 (PPAHEESRAPSKGFVVRDAPWTSNSSEKAPDMSSSEEFPSFGAQVAPKTLPWGPKR) is disordered. Positions 1233–1249 (WTSNSSEKAPDMSSSEE) are enriched in polar residues. Phosphoserine is present on residues serine 1247 and serine 1252.

The protein localises to the cytoplasm. It is found in the nucleus. Functionally, appears to play a role in cell sterol metabolism. It may function to protect cells from over-accumulation of cholesterol. The sequence is that of Vigilin (Hdlbp) from Mus musculus (Mouse).